The sequence spans 518 residues: Cyclin-L2 (518 aa).

2 cyclin-like regions span residues 81–183 and 196–280; these read ELIQ…RVLK and KIIV…KILQ. A disordered region spans residues 310 to 518; sequence AKGLLPGTAP…DHPGHSRHRR (209 aa). Ser328, Ser335, Ser345, Ser348, and Ser366 each carry phosphoserine. Positions 382 to 420 are RS; that stretch reads RSREQSYSRSPSRSASPKRRKSDSGSTSGGSKSQSRSRS. Positions 405–427 are enriched in low complexity; sequence SGSTSGGSKSQSRSRSRSDSPPR. Residues 438–450 are compositionally biased toward basic and acidic residues; it reads SEVRGSRKSKDCK. Over residues 455–469 the composition is skewed to basic residues; that stretch reads KPHKSRSRSSSRSRS. Basic and acidic residues-rich tracts occupy residues 470-479 and 487-512; these read RSRERTDNSG and YYRD…DHPG.

The protein belongs to the cyclin family. Cyclin L subfamily. Interacts with CDK11A, CDK11B, CDK12, CDK13 and POLR2A, the hyperphosphorylated C-terminal domain (CTD) of RNA polymerase II. May form a ternary complex with CDK11B and casein kinase II (CKII). Interacts with pre-mRNA-splicing factors, including at least SRSF1, SRSF2 and SRSF7/SLU7. Widely expressed (at protein level).

The protein localises to the nucleus speckle. It is found in the nucleus. It localises to the nucleoplasm. Functionally, involved in pre-mRNA splicing. May induce cell death, possibly by acting on the transcription and RNA processing of apoptosis-related factors. The chain is Cyclin-L2 (Ccnl2) from Mus musculus (Mouse).